Reading from the N-terminus, the 111-residue chain is uncharacterized protein (111 aa).

Residues 8–111 enclose the HIT domain; that stretch reads LFLKIIKREE…HVHIIPYYKK (104 aa). The short motif at 100–104 is the Histidine triad motif element; the sequence is HTHVH.

This is an uncharacterized protein from Mesomycoplasma hyorhinis (Mycoplasma hyorhinis).